The primary structure comprises 379 residues: RNA-splicing ligase RtcB2 (379 aa).

The Mn(2+) site is built by aspartate 74, cysteine 77, histidine 137, histidine 168, and histidine 239. 136–140 (NHFVE) is a binding site for GMP. GMP is bound by residues 239 to 240 (HN), serine 277, 294 to 297 (HGAG), and lysine 372. Residue histidine 294 is the GMP-histidine intermediate of the active site.

This sequence belongs to the RtcB family. RtcB2 subfamily. Mn(2+) serves as cofactor.

It catalyses the reaction a 3'-end 3'-phospho-ribonucleotide-RNA + a 5'-end dephospho-ribonucleoside-RNA + GTP = a ribonucleotidyl-ribonucleotide-RNA + GMP + diphosphate. Functionally, GTP-dependent RNA ligase involved in rRNA repair. Repairs damaged 16S rRNA in 30S subunits that has been cleaved between adenine-1493 and guanosine-1494 (E.coli nubering). This specific cleavage is inflicted by CdiA (ECL_04451) or by colicin E3-type (ColE3) proteins. Poorly repairs damaged rRNA in the 70S ribosome; addition of release factor PrfH improves repair about 3-fold in vitro, probably because PrfH hydrolyzes the nascent chain allowing ribosomal subunit dissociation. In vivo the PrfH-RtcB2 pair restores growth in the presence of ribotoxins that specifically create this damage. Does not repair damaged tRNA (tested with tRNA(Asp) and tRNA(Arg)). The polypeptide is RNA-splicing ligase RtcB2 (Escherichia coli (strain ATCC 25922 / DSM 1103 / LMG 8223 / NCIMB 12210 / NCTC 12241 / WDCM 00013 / Seattle 1946)).